We begin with the raw amino-acid sequence, 120 residues long: NAD(P)H-quinone oxidoreductase subunit 3, chloroplastic (120 aa).

3 helical membrane passes run 9-29, 64-84, and 88-108; these read IFWA…LISG, MFAL…PWAM, and VLGV…IVGL.

Belongs to the complex I subunit 3 family. NDH is composed of at least 16 different subunits, 5 of which are encoded in the nucleus.

Its subcellular location is the plastid. The protein resides in the chloroplast thylakoid membrane. It catalyses the reaction a plastoquinone + NADH + (n+1) H(+)(in) = a plastoquinol + NAD(+) + n H(+)(out). The catalysed reaction is a plastoquinone + NADPH + (n+1) H(+)(in) = a plastoquinol + NADP(+) + n H(+)(out). Functionally, NDH shuttles electrons from NAD(P)H:plastoquinone, via FMN and iron-sulfur (Fe-S) centers, to quinones in the photosynthetic chain and possibly in a chloroplast respiratory chain. The immediate electron acceptor for the enzyme in this species is believed to be plastoquinone. Couples the redox reaction to proton translocation, and thus conserves the redox energy in a proton gradient. This chain is NAD(P)H-quinone oxidoreductase subunit 3, chloroplastic, found in Lupinus luteus (European yellow lupine).